A 975-amino-acid chain; its full sequence is Exportin-2 (975 aa).

The Importin N-terminal domain occupies 29–105 (AEKLLESTEL…KTLIVTLMLH (77 aa)).

It belongs to the XPO2/CSE1 family. In terms of assembly, binds with high affinity to importin-alpha only in the presence of RanGTP.

The protein localises to the cytoplasm. The protein resides in the nucleus. Its function is as follows. Export receptor for importin alpha. Mediates importin-alpha re-export from the nucleus to the cytoplasm after import substrates have been released into the nucleoplasm. The protein is Exportin-2 of Drosophila melanogaster (Fruit fly).